A 77-amino-acid polypeptide reads, in one-letter code: Putative regulatory protein tsl2331 (77 aa).

It belongs to the RemA family.

The protein is Putative regulatory protein tsl2331 of Thermosynechococcus vestitus (strain NIES-2133 / IAM M-273 / BP-1).